Consider the following 31-residue polypeptide: Photosystem II reaction center protein T (31 aa).

A helical transmembrane segment spans residues 3-23 (SFAYILILGLAIATLFFAIAF).

Belongs to the PsbT family. As to quaternary structure, PSII is composed of 1 copy each of membrane proteins PsbA, PsbB, PsbC, PsbD, PsbE, PsbF, PsbH, PsbI, PsbJ, PsbK, PsbL, PsbM, PsbT, PsbX, PsbY, PsbZ, Psb30/Ycf12, peripheral proteins PsbO, CyanoQ (PsbQ), PsbU, PsbV and a large number of cofactors. It forms dimeric complexes.

The protein localises to the cellular thylakoid membrane. In terms of biological role, found at the monomer-monomer interface of the photosystem II (PS II) dimer, plays a role in assembly and dimerization of PSII. PSII is a light-driven water plastoquinone oxidoreductase, using light energy to abstract electrons from H(2)O, generating a proton gradient subsequently used for ATP formation. The chain is Photosystem II reaction center protein T from Synechococcus sp. (strain CC9311).